The sequence spans 199 residues: Putative rhomboid protease YdcA (199 aa).

6 consecutive transmembrane segments (helical) span residues 14 to 34 (LYPVVTFILALQAVLWLFFSL), 65 to 85 (ILLHAGFTHLLFNSMSIFLFA), 97 to 117 (FLLVYAGSGIIGNIGTYVTEP), 122 to 142 (HVGASGAIFGLFGVYLFMVLF), 147 to 167 (IGQEHSKMIITLLAFAVLMSF), and 172 to 192 (INMMAHLFGLCGGFLLSFLCV). S126 (nucleophile) is an active-site residue. The Charge relay system role is filled by H177.

The protein belongs to the peptidase S54 family.

The protein resides in the cell membrane. This Bacillus subtilis (strain 168) protein is Putative rhomboid protease YdcA (ydcA).